The primary structure comprises 309 residues: D-alanine--D-alanine ligase (309 aa).

The region spanning 104–301 (KQIWQGSDLP…FDALCVEILA (198 aa)) is the ATP-grasp domain. 130–185 (VASLGLPVIIKPVHEGSSIGMSKVEKIEDFAPAIEKATAHDAIVMAEKWITGREYT) contacts ATP. 3 residues coordinate Mg(2+): aspartate 255, glutamate 268, and asparagine 270.

Belongs to the D-alanine--D-alanine ligase family. Mg(2+) is required as a cofactor. The cofactor is Mn(2+).

The protein localises to the cytoplasm. It catalyses the reaction 2 D-alanine + ATP = D-alanyl-D-alanine + ADP + phosphate + H(+). It functions in the pathway cell wall biogenesis; peptidoglycan biosynthesis. Cell wall formation. The protein is D-alanine--D-alanine ligase of Acinetobacter baylyi (strain ATCC 33305 / BD413 / ADP1).